The primary structure comprises 197 residues: Inner membrane-spanning protein YciB (197 aa).

Transmembrane regions (helical) follow at residues Ile36–Leu56, Gly64–Ser84, Trp90–Gly110, Leu135–Phe155, and Phe162–Leu182.

It belongs to the YciB family.

The protein resides in the cell inner membrane. Plays a role in cell envelope biogenesis, maintenance of cell envelope integrity and membrane homeostasis. This chain is Inner membrane-spanning protein YciB, found in Pseudomonas putida (strain GB-1).